An 84-amino-acid chain; its full sequence is MSPLAQIFALPVRAYRLLLSPWVGHGCRYQPTCSVYALEALERHGALKGGWLAARRILRCHPWGGSGYDPVPGADPEHDRRPRG.

The interval 63-84 (WGGSGYDPVPGADPEHDRRPRG) is disordered. The segment covering 75–84 (DPEHDRRPRG) has biased composition (basic and acidic residues).

Belongs to the UPF0161 family.

The protein resides in the cell inner membrane. Its function is as follows. Could be involved in insertion of integral membrane proteins into the membrane. The protein is Putative membrane protein insertion efficiency factor of Cereibacter sphaeroides (strain ATCC 17025 / ATH 2.4.3) (Rhodobacter sphaeroides).